We begin with the raw amino-acid sequence, 664 residues long: Cytoskeleton-associated protein 2 (664 aa).

Positions 1-38 (MAESRKRFLGRAARNPLPVTRDLQLPPTRRDQPAFREQ) are disordered. The span at 28-38 (TRRDQPAFREQ) shows a compositional bias: basic and acidic residues. Positions 160-319 (PKQDSNVSKK…ASKDAARTDS (160 aa)) are association with alpha- and beta-tubulin. The residue at position 186 (Ser-186) is a Phosphoserine. Disordered regions lie at residues 254 to 273 (IRSLHSSSHGAAKQGLSRPL), 283 to 328 (LDKE…MVKP), 366 to 393 (GKGKGLKRPPHSVVTQAEPKGQSENPVG), and 512 to 545 (AHATKEPIQEVNADANVGSGKPGEENEHHGKVEV). The segment covering 300-309 (GSSQAPSRSI) has biased composition (polar residues). Over residues 366 to 375 (GKGKGLKRPP) the composition is skewed to basic residues. The span at 533–545 (PGEENEHHGKVEV) shows a compositional bias: basic and acidic residues. Thr-561 bears the Phosphothreonine mark. Phosphoserine is present on Ser-577. Residue Thr-579 is modified to Phosphothreonine. Ser-584 is subject to Phosphoserine.

The protein belongs to the CKAP2 family. As to quaternary structure, associates with alpha- and beta-tubulins.

The protein localises to the cytoplasm. The protein resides in the cytoskeleton. It localises to the spindle. Its subcellular location is the spindle pole. Possesses microtubule stabilizing properties. Involved in regulating aneuploidy, cell cycling, and cell death in a p53-dependent manner. The sequence is that of Cytoskeleton-associated protein 2 from Mus musculus (Mouse).